The chain runs to 457 residues: MDHLPIFCQLRDRDCLIVGGGDVAERKARLLLDAGARLTVNALAFIPQFTAWADAGMLTLVEGPFDESLLDTCWLAIAATDDDTLNQRVSEAAEARRIFCNVVDAPKAASFIMPSIIDRSPLMVAVSSGGTSPVLARLLREKLESLLPLHLGQVAKYAGQLRGRVKQQFTTMSERRRFWEKLFVNDRLAQSLANNDQKAITETTEQLINEPLDHRGEVVLVGAGPGDAGLLTLKGLQQIQQADVVVYDRLVSDDIMNLVRRDADRVFVGKRAGYHCVPQEEINQILLREAQKGKRVVRLKGGDPFIFGRGGEELETLCNAGIPFSVVPGITAASGCSAYSGIPLTHRDYAQSVRLITGHLKTGGELDWENLAAEKQTLVFYMGLNQAATIQQKLIEHGMPGEMPVAIVENGTAVTQRVIDGTLTQLGELAQQMNSPSLIIIGRVVGLRDKLNWFSNH.

Residues 1–204 form a precorrin-2 dehydrogenase /sirohydrochlorin ferrochelatase region; the sequence is MDHLPIFCQL…NDQKAITETT (204 aa). Residues 22-23 and 43-44 contribute to the NAD(+) site; these read DV and LA. Ser128 bears the Phosphoserine mark. A uroporphyrinogen-III C-methyltransferase region spans residues 216–457; the sequence is GEVVLVGAGP…RDKLNWFSNH (242 aa). An S-adenosyl-L-methionine-binding site is contributed by Pro225. Residue Asp248 is the Proton acceptor of the active site. Lys270 (proton donor) is an active-site residue. S-adenosyl-L-methionine contacts are provided by residues 301 to 303, Ile306, 331 to 332, Met382, and Gly411; these read GGD and TA.

In the N-terminal section; belongs to the precorrin-2 dehydrogenase / sirohydrochlorin ferrochelatase family. The protein in the C-terminal section; belongs to the precorrin methyltransferase family.

It catalyses the reaction uroporphyrinogen III + 2 S-adenosyl-L-methionine = precorrin-2 + 2 S-adenosyl-L-homocysteine + H(+). The catalysed reaction is precorrin-2 + NAD(+) = sirohydrochlorin + NADH + 2 H(+). It carries out the reaction siroheme + 2 H(+) = sirohydrochlorin + Fe(2+). It participates in cofactor biosynthesis; adenosylcobalamin biosynthesis; precorrin-2 from uroporphyrinogen III: step 1/1. Its pathway is cofactor biosynthesis; adenosylcobalamin biosynthesis; sirohydrochlorin from precorrin-2: step 1/1. It functions in the pathway porphyrin-containing compound metabolism; siroheme biosynthesis; precorrin-2 from uroporphyrinogen III: step 1/1. The protein operates within porphyrin-containing compound metabolism; siroheme biosynthesis; siroheme from sirohydrochlorin: step 1/1. It participates in porphyrin-containing compound metabolism; siroheme biosynthesis; sirohydrochlorin from precorrin-2: step 1/1. In terms of biological role, multifunctional enzyme that catalyzes the SAM-dependent methylations of uroporphyrinogen III at position C-2 and C-7 to form precorrin-2 via precorrin-1. Then it catalyzes the NAD-dependent ring dehydrogenation of precorrin-2 to yield sirohydrochlorin. Finally, it catalyzes the ferrochelation of sirohydrochlorin to yield siroheme. In Shigella boydii serotype 18 (strain CDC 3083-94 / BS512), this protein is Siroheme synthase.